A 456-amino-acid polypeptide reads, in one-letter code: Probable serine incorporator (456 aa).

11 helical membrane passes run Ala-10–Phe-32, Ile-44–Gly-64, Val-95–Ser-115, Gly-126–Pro-146, Val-153–Leu-173, Val-195–Ile-215, Lys-234–Pro-254, Leu-265–Phe-285, Leu-301–Tyr-321, Val-383–Met-403, and Ile-430–Phe-450.

The protein belongs to the TDE1 family.

It is found in the endoplasmic reticulum membrane. Functionally, enhances the incorporation of serine into phosphatidylserine and sphingolipids. The protein is Probable serine incorporator (serinc) of Nematostella vectensis (Starlet sea anemone).